We begin with the raw amino-acid sequence, 1381 residues long: Hepatocyte growth factor receptor (1381 aa).

The first 24 residues, M1–G24, serve as a signal peptide directing secretion. Topologically, residues E25–T932 are extracellular. Residues K27–L515 enclose the Sema domain. Residue N45 is glycosylated (N-linked (GlcNAc...) asparagine). Cystine bridges form between C95/C101, C98/C160, C133/C141, and C172/C175. N-linked (GlcNAc...) asparagine glycosylation occurs at N106. N-linked (GlcNAc...) asparagine glycosylation is present at N149. N202 carries an N-linked (GlcNAc...) asparagine glycan. 2 disulfide bridges follow: C298/C363 and C385/C397. N-linked (GlcNAc...) asparagine glycans are attached at residues N399 and N405. Intrachain disulfides connect C520–C538, C526–C561, C529–C545, and C541–C551. 3 IPT/TIG domains span residues P563–V655, P657–R739, and P742–V836. O-linked (Man) threonine glycosylation is present at T582. Residues N607 and N635 are each glycosylated (N-linked (GlcNAc...) asparagine). T676 and T761 each carry an O-linked (Man) threonine glycan. N-linked (GlcNAc...) asparagine glycans are attached at residues N785, N879, and N930. Residues G933–L955 traverse the membrane as a helical segment. Residues K956–T1381 lie on the Cytoplasmic side of the membrane. S966 carries the phosphoserine modification. T977 is modified (phosphothreonine). Phosphoserine occurs at positions 990, 997, and 1000. At Y1003 the chain carries Phosphotyrosine. The region spanning V1078–I1345 is the Protein kinase domain. ATP contacts are provided by residues I1084–V1092 and K1110. D1204 acts as the Proton acceptor in catalysis. Positions L1212–T1381 are interaction with RANBP9. Y1230 carries the post-translational modification Phosphotyrosine. Residues Y1234 and Y1235 each carry the phosphotyrosine; by autocatalysis modification. At T1289 the chain carries Phosphothreonine. Residues W1320 to V1359 are interaction with MUC20. A phosphotyrosine; by autocatalysis mark is found at Y1349 and Y1356. The residue at position 1365 (Y1365) is a Phosphotyrosine.

Belongs to the protein kinase superfamily. Tyr protein kinase family. As to quaternary structure, heterodimer made of an alpha chain (50 kDa) and a beta chain (145 kDa) which are disulfide linked. Binds PLXNB1. Interacts when phosphorylated with downstream effectors including STAT3, PIK3R1, SRC, PCLG1, GRB2 and GAB1. Interacts with SPSB1, SPSB2 and SPSB4. Interacts with INPP5D/SHIP1. When phosphorylated at Tyr-1356, interacts with INPPL1/SHIP2. Interacts with RANBP9 and RANBP10, as well as SPSB1, SPSB2, SPSB3 and SPSB4. SPSB1 binding occurs in the presence and in the absence of HGF, however HGF treatment has a positive effect on this interaction. Interacts with MUC20; prevents interaction with GRB2 and suppresses hepatocyte growth factor-induced cell proliferation. Interacts with GRB10. Interacts with PTPN1 and PTPN2. Interacts with HSP90AA1 and HSP90AB1; the interaction suppresses MET kinase activity. Interacts with tensin TNS3. Interacts (when phosphorylated) with tensin TNS4 (via SH2 domain); the interaction increases MET protein stability by inhibiting MET endocytosis and subsequent lysosomal degradation. Autophosphorylated in response to ligand binding on Tyr-1234 and Tyr-1235 in the kinase domain leading to further phosphorylation of Tyr-1349 and Tyr-1356 in the C-terminal multifunctional docking site. Dephosphorylated by PTPRJ at Tyr-1349 and Tyr-1365. Dephosphorylated by PTPN1 and PTPN2. In terms of processing, ubiquitinated. Ubiquitination by CBL regulates the receptor stability and activity through proteasomal degradation. Post-translationally, O-mannosylation of IPT/TIG domains by TMEM260 is required for protein maturation. O-mannosylated residues are composed of single mannose glycans that are not elongated or modified.

It is found in the membrane. The enzyme catalyses L-tyrosyl-[protein] + ATP = O-phospho-L-tyrosyl-[protein] + ADP + H(+). In its inactive state, the C-terminal tail interacts with the catalytic domain and inhibits the kinase activity. Upon ligand binding, the C-terminal tail is displaced and becomes phosphorylated, thus increasing the kinase activity. Functionally, receptor tyrosine kinase that transduces signals from the extracellular matrix into the cytoplasm by binding to hepatocyte growth factor/HGF ligand. Regulates many physiological processes including proliferation, scattering, morphogenesis and survival. Ligand binding at the cell surface induces autophosphorylation of MET on its intracellular domain that provides docking sites for downstream signaling molecules. Following activation by ligand, interacts with the PI3-kinase subunit PIK3R1, PLCG1, SRC, GRB2, STAT3 or the adapter GAB1. Recruitment of these downstream effectors by MET leads to the activation of several signaling cascades including the RAS-ERK, PI3 kinase-AKT, or PLCgamma-PKC. The RAS-ERK activation is associated with the morphogenetic effects while PI3K/AKT coordinates prosurvival effects. During embryonic development, MET signaling plays a role in gastrulation, development and migration of muscles and neuronal precursors, angiogenesis and kidney formation. In adults, participates in wound healing as well as organ regeneration and tissue remodeling. Also promotes differentiation and proliferation of hematopoietic cells. This chain is Hepatocyte growth factor receptor (MET), found in Colobus guereza (Mantled guereza).